Reading from the N-terminus, the 69-residue chain is DNA gyrase inhibitor YacG (69 aa).

Positions 12, 15, 31, and 35 each coordinate Zn(2+). Positions 49–69 (RVPVEPKPDEGETPDQAERPQ) are disordered.

Belongs to the DNA gyrase inhibitor YacG family. In terms of assembly, interacts with GyrB. Requires Zn(2+) as cofactor.

Its function is as follows. Inhibits all the catalytic activities of DNA gyrase by preventing its interaction with DNA. Acts by binding directly to the C-terminal domain of GyrB, which probably disrupts DNA binding by the gyrase. The polypeptide is DNA gyrase inhibitor YacG (Thiobacillus denitrificans (strain ATCC 25259 / T1)).